A 119-amino-acid polypeptide reads, in one-letter code: Small ribosomal subunit protein uS10 (119 aa).

It belongs to the universal ribosomal protein uS10 family. In terms of assembly, component of the small ribosomal subunit. Mature ribosomes consist of a small (40S) and a large (60S) subunit. The 40S subunit contains about 32 different proteins and 1 molecule of RNA (18S). The 60S subunit contains 45 different proteins and 3 molecules of RNA (25S, 5.8S and 5S).

It localises to the cytoplasm. Its function is as follows. Component of the ribosome, a large ribonucleoprotein complex responsible for the synthesis of proteins in the cell. The small ribosomal subunit (SSU) binds messenger RNAs (mRNAs) and translates the encoded message by selecting cognate aminoacyl-transfer RNA (tRNA) molecules. The large subunit (LSU) contains the ribosomal catalytic site termed the peptidyl transferase center (PTC), which catalyzes the formation of peptide bonds, thereby polymerizing the amino acids delivered by tRNAs into a polypeptide chain. The nascent polypeptides leave the ribosome through a tunnel in the LSU and interact with protein factors that function in enzymatic processing, targeting, and the membrane insertion of nascent chains at the exit of the ribosomal tunnel. The chain is Small ribosomal subunit protein uS10 (RPS20) from Candida albicans (strain SC5314 / ATCC MYA-2876) (Yeast).